The sequence spans 889 residues: DNA mismatch repair protein MutS (889 aa).

620-627 (GPNMAGKS) provides a ligand contact to ATP. Residues 812–831 (AAAPSGAARRGRPAREKEPG) form a disordered region.

It belongs to the DNA mismatch repair MutS family.

This protein is involved in the repair of mismatches in DNA. It is possible that it carries out the mismatch recognition step. This protein has a weak ATPase activity. This chain is DNA mismatch repair protein MutS, found in Syntrophobacter fumaroxidans (strain DSM 10017 / MPOB).